The following is a 266-amino-acid chain: MMVYNGSQLESVEEGEAVAVPGPPPEPRAPEPGAPVPEPGLDLSLSPRSESPGRGRPNCSPGRRKGRADRRGGARKGRQVRFLLAPPSPVRSGPPPAAASSSEKPEAPQDLGTPVQQSSLALSLELQAARAAAGGQFDAAKAVEEQLRKSFQTRCGLEESVTEGLNVPRSKRLFRDLVSLQVPEEQVLNAALREKLALLPPQARAPPPKEPPGPGPDMTILCDPETLFYESPHLTLEGLPPLRLQLRPRPSEDTFLMHRTLRRWEA.

The span at 1-10 shows a compositional bias: polar residues; that stretch reads MMVYNGSQLE. Residues 1–118 are disordered; the sequence is MMVYNGSQLE…QDLGTPVQQS (118 aa). Residues 21 to 38 show a composition bias toward pro residues; it reads PGPPPEPRAPEPGAPVPE. A phosphoserine mark is found at serine 46 and serine 51. Over residues 62–79 the composition is skewed to basic residues; it reads GRRKGRADRRGGARKGRQ. Residues 86 to 97 are compositionally biased toward pro residues; it reads PPSPVRSGPPPA.

It belongs to the PPP1R35 family. As to quaternary structure, interacts with PPP1CA; this interaction mediates the PPP1CA phosphatase activity inhibition. Interacts with RTTN; this interaction allows the mutual recruitment to the centriole.

The protein localises to the cytoplasm. It is found in the cytoskeleton. Its subcellular location is the microtubule organizing center. It localises to the centrosome. The protein resides in the centriole. Functionally, during centriole duplication, plays a role in the centriole elongation by promoting the recruitment of the microtubule-binding elongation machinery through its interaction with RTTN, leading to the centriole to centrosome conversion. In addition may play a role in the primary cilia assembly. In Bos taurus (Bovine), this protein is Protein phosphatase 1 regulatory subunit 35.